Here is a 424-residue protein sequence, read N- to C-terminus: PDZ and LIM domain protein 7 (424 aa).

The region spanning 1–85 (MDSFKVVLEG…RLSLSLSRAQ (85 aa)) is the PDZ domain. Residue S78 is modified to Phosphoserine. Residues 81–98 (LSRAQPAQSKPQKVQTPD) show a composition bias toward polar residues. A disordered region spans residues 81 to 221 (LSRAQPAQSK…HTQPATPTPM (141 aa)). T96 is subject to Phosphothreonine. Residues 110 to 123 (SKQRLMEDTEDWRP) are compositionally biased toward basic and acidic residues. Residues 174–187 (EPWPGPTTPSPTSR) show a composition bias toward pro residues. Over residues 204-221 (KTSTVLTRHTQPATPTPM) the composition is skewed to polar residues. LIM zinc-binding domains follow at residues 247 to 305 (PVCH…VRYA), 306 to 365 (PSCA…MFGT), and 366 to 424 (KCRG…FSHV).

Binds via its LIM zinc-binding 3 domain (LIM 3) domain to endocytic codes of INSR, but not with those of IGF1R, LDLR, TFRC, or EGFR. Interacts with various PKC isoforms through the LIM zinc-binding domains. Binds to RET in a phosphorylation-independent manner via its LIM zinc-binding 2 domain (LIM 2). Probably part of a complex with SHC and the RET dimer. Interacts with TPM2, TBX4 and TBX5.

It localises to the cytoplasm. The protein localises to the cytoskeleton. Functionally, may function as a scaffold on which the coordinated assembly of proteins can occur. May play a role as an adapter that, via its PDZ domain, localizes LIM-binding proteins to actin filaments of both skeletal muscle and nonmuscle tissues. Involved in both of the two fundamental mechanisms of bone formation, direct bone formation (e.g. embryonic flat bones mandible and cranium), and endochondral bone formation (e.g. embryonic long bone development). Plays a role during fracture repair. Involved in BMP6 signaling pathway. The sequence is that of PDZ and LIM domain protein 7 (PDLIM7) from Bos taurus (Bovine).